Reading from the N-terminus, the 322-residue chain is GTP 3',8-cyclase (322 aa).

Positions 5–217 constitute a Radical SAM core domain; sequence SYGRVVDYLR…DIISKKYNIK (213 aa). Arg14 serves as a coordination point for GTP. [4Fe-4S] cluster-binding residues include Cys21 and Cys25. Position 27 (Tyr27) interacts with S-adenosyl-L-methionine. Residue Cys28 participates in [4Fe-4S] cluster binding. A GTP-binding site is contributed by Arg64. Residue Gly68 coordinates S-adenosyl-L-methionine. Thr95 serves as a coordination point for GTP. Ser119 contacts S-adenosyl-L-methionine. Lys155 lines the GTP pocket. S-adenosyl-L-methionine is bound at residue Met189. [4Fe-4S] cluster is bound by residues Cys249 and Cys252. Position 254–256 (254–256) interacts with GTP; that stretch reads RLR. Cys266 provides a ligand contact to [4Fe-4S] cluster.

Belongs to the radical SAM superfamily. MoaA family. Monomer and homodimer. [4Fe-4S] cluster serves as cofactor.

It catalyses the reaction GTP + AH2 + S-adenosyl-L-methionine = (8S)-3',8-cyclo-7,8-dihydroguanosine 5'-triphosphate + 5'-deoxyadenosine + L-methionine + A + H(+). Its pathway is cofactor biosynthesis; molybdopterin biosynthesis. Its function is as follows. Catalyzes the cyclization of GTP to (8S)-3',8-cyclo-7,8-dihydroguanosine 5'-triphosphate. The polypeptide is GTP 3',8-cyclase (Campylobacter fetus subsp. fetus (strain 82-40)).